Here is a 121-residue protein sequence, read N- to C-terminus: Large ribosomal subunit protein uL14c (121 aa).

Belongs to the universal ribosomal protein uL14 family. As to quaternary structure, part of the 50S ribosomal subunit.

The protein resides in the plastid. Its subcellular location is the chloroplast. Functionally, binds to 23S rRNA. The polypeptide is Large ribosomal subunit protein uL14c (Phaeodactylum tricornutum (strain CCAP 1055/1)).